The following is a 244-amino-acid chain: Putative lipoprotein LprA (244 aa).

The signal sequence occupies residues methionine 1–glycine 24. Residue cysteine 25 is the site of N-palmitoyl cysteine attachment. The S-diacylglycerol cysteine moiety is linked to residue cysteine 25.

It belongs to the LppX/LprAFG lipoprotein family.

It localises to the cell membrane. The chain is Putative lipoprotein LprA (lprA) from Mycobacterium tuberculosis (strain CDC 1551 / Oshkosh).